The following is a 434-amino-acid chain: Zinc finger protein kipf (434 aa).

In terms of domain architecture, ZAD spans 7–88 (NVCRTCMDET…EQSYQHFFRV (82 aa)). Zn(2+) is bound by residues C9, C12, C61, and C64. The disordered stretch occupies residues 117-173 (QLKSDRQQDTQQMTKTQKPDDDLSQKQTLQAKLQEGNIDGPPESFTLHPRKRTCRTE). The C2H2-type 1; degenerate zinc finger occupies 197–219 (YNCPHCSKRFCSQTQLRTHITDL). 3 consecutive C2H2-type zinc fingers follow at residues 221 to 243 (NRCPYCPRTYMQKSNLKRHLRNH), 249 to 271 (HKCFHCSKAFMRKDHLKRHLRTH), and 277 to 299 (LSCSQCSAVFIEHVQLEIHRREH). The segment at 295–328 (HRREHKQRPGSSKSESTKDPDSDDSDQAQDLKPK) is disordered. Phosphoserine is present on residues S316 and S319. 3 C2H2-type zinc fingers span residues 348-370 (PICDICQKKFSSVYALKRHMLTH), 377-399 (KKCTYCSEEFKTEKHLKRHERGH), and 404-427 (FRCEFCSLVFVDVNYLRKHKKRIH).

In terms of assembly, homodimer; mediated by the ZAD domain. Interacts (via C2H2 type zinc finger 4) with rhi/rhino (via Chromo domain). Dimerization is required for association with DNA and interaction with rhi/rhino. As to expression, primarily expressed in ovaries and absent from testes. In ovaries very low levels in germline stem cells and cystoblasts but abundant in developing cysts and polyploid nurse cells.

Its subcellular location is the nucleus. The protein localises to the chromosome. Its function is as follows. DNA-binding zinc finger protein that recruits chromo domain protein rhino/rhi to specific chromatin regions enriched in H3K9me2/3 histone methylation, mediating piRNA (piwi-interacting RNA) biogenesis. May bind to GC rich DNA sequences including a 5'-GRGGN-3' sequence motif. Nucleates rhi/rhino accumulation and stabilizes its expansion. Involved in piRNA transposon repression, particularly in the female ovary during oogenesis. The protein is Zinc finger protein kipf of Drosophila melanogaster (Fruit fly).